A 38-amino-acid polypeptide reads, in one-letter code: Photosystem II reaction center protein L (38 aa).

A helical transmembrane segment spans residues 17-37 (SLYWGLLLIFVLAVLFSNYFF).

It belongs to the PsbL family. As to quaternary structure, PSII is composed of 1 copy each of membrane proteins PsbA, PsbB, PsbC, PsbD, PsbE, PsbF, PsbH, PsbI, PsbJ, PsbK, PsbL, PsbM, PsbT, PsbX, PsbY, PsbZ, Psb30/Ycf12, at least 3 peripheral proteins of the oxygen-evolving complex and a large number of cofactors. It forms dimeric complexes.

The protein localises to the plastid. It localises to the chloroplast thylakoid membrane. One of the components of the core complex of photosystem II (PSII). PSII is a light-driven water:plastoquinone oxidoreductase that uses light energy to abstract electrons from H(2)O, generating O(2) and a proton gradient subsequently used for ATP formation. It consists of a core antenna complex that captures photons, and an electron transfer chain that converts photonic excitation into a charge separation. This subunit is found at the monomer-monomer interface and is required for correct PSII assembly and/or dimerization. This is Photosystem II reaction center protein L from Angiopteris evecta (Mule's foot fern).